Here is a 343-residue protein sequence, read N- to C-terminus: MTTTRTITRPDDWHLHLRDGEVLKDTVRDTSRYMGRAVIMPNLVPPVTNTALALAYQARIFAAQPKAGFKPLMTLYLTDNTSADEIKKAKASGQIYAAKLYPAGATTNSESGVTSVEKIKEALQAMQEVGMLLLIHGEVTASDIDIFDREEIFLQKVLAPIVASYPNLKIVLEHITTANAVDFVNNAGDNVAATITAHHLMFNRNHMLVGGIRPHLYCLPILKRNIHQQALIKAATSGAKKFFLGTDSAPHAVNRKEAACGCAGCYTAHAAIELYAEVFEQAGALDKLEAFASFNGPDFYNLPRNSDTITLEKSAWDVPASMSFGNQQVVPIKANEQMLWKVL.

The Zn(2+) site is built by His-14 and His-16. Substrate contacts are provided by residues 16 to 18 and Asn-42; that span reads HLR. The Zn(2+) site is built by Lys-99, His-136, and His-174. An N6-carboxylysine modification is found at Lys-99. His-136 contributes to the substrate binding site. Leu-219 lines the substrate pocket. Position 247 (Asp-247) interacts with Zn(2+). The active site involves Asp-247. 2 residues coordinate substrate: His-251 and Ala-263.

This sequence belongs to the metallo-dependent hydrolases superfamily. DHOase family. Class II DHOase subfamily. Homodimer. Zn(2+) serves as cofactor.

It carries out the reaction (S)-dihydroorotate + H2O = N-carbamoyl-L-aspartate + H(+). It functions in the pathway pyrimidine metabolism; UMP biosynthesis via de novo pathway; (S)-dihydroorotate from bicarbonate: step 3/3. Functionally, catalyzes the reversible cyclization of carbamoyl aspartate to dihydroorotate. This chain is Dihydroorotase, found in Psychromonas ingrahamii (strain DSM 17664 / CCUG 51855 / 37).